Consider the following 175-residue polypeptide: Transcriptional activatory protein BadR (175 aa).

In terms of domain architecture, HTH marR-type spans 20–156 (ANRLFFRLYQ…TLHYLLKILD (137 aa)).

Functionally, transcriptional activator of genes for the anaerobic degradation of benzoate. The chain is Transcriptional activatory protein BadR (badR) from Rhodopseudomonas palustris (strain ATCC BAA-98 / CGA009).